The primary structure comprises 213 residues: MYISFILFSIIFIFLGVIENFIINKRVLYKPNFLLYSEKKNKKKSTPEQVTTRVNKDLKEKKRKRPRSKILECLLKEKVEKVEKVEKNSDENQCSNVDKEIREGKRVPRLRVRNTNNHIYASIIDDYKKYVLCSTCSRDATLSKILGTYRRKATNRVINNGRTIKSAWEIGKIIGKKALSKGIFKVRFDRARHPYAGKVEALAEGARAVGLLL.

Belongs to the universal ribosomal protein uL18 family.

It localises to the plastid. It is found in the apicoplast. This chain is Large ribosomal subunit protein uL18c (RPL18), found in Plasmodium falciparum (isolate 3D7).